Reading from the N-terminus, the 255-residue chain is Triosephosphate isomerase (255 aa).

9-11 (NWK) serves as a coordination point for substrate. The Electrophile role is filled by His-96. The Proton acceptor role is filled by Glu-170. Substrate contacts are provided by residues Gly-176, Ser-216, and 237 to 238 (GG).

It belongs to the triosephosphate isomerase family. Homodimer.

The protein resides in the cytoplasm. It carries out the reaction D-glyceraldehyde 3-phosphate = dihydroxyacetone phosphate. The protein operates within carbohydrate biosynthesis; gluconeogenesis. It participates in carbohydrate degradation; glycolysis; D-glyceraldehyde 3-phosphate from glycerone phosphate: step 1/1. In terms of biological role, involved in the gluconeogenesis. Catalyzes stereospecifically the conversion of dihydroxyacetone phosphate (DHAP) to D-glyceraldehyde-3-phosphate (G3P). The polypeptide is Triosephosphate isomerase (Magnetococcus marinus (strain ATCC BAA-1437 / JCM 17883 / MC-1)).